The sequence spans 487 residues: E3 ubiquitin-protein ligase RNF8 (487 aa).

Positions Val-38–Leu-92 constitute an FHA domain. The segment at Gln-68–Gly-72 is required for interaction with PIWIL1. Residues Cys-135–Ala-195 form a disordered region. Ser-157 carries the phosphoserine modification. The segment covering Ala-184–Gly-193 has biased composition (basic and acidic residues). The RING-type zinc finger occupies Cys-405–Arg-443.

It belongs to the RNF8 family. As to quaternary structure, homodimer. Forms a E2-E3 ubiquitin ligase complex composed of the RNF8 homodimer and a E2 heterodimer of UBE2N and UBE2V2. Interacts with class III E2s, including UBE2E1, UBE2E2, and UBE2E3 and with UBE2N. Interacts with RXRA. Interacts (via FHA domain) with phosphorylated HERC2 (via C-terminus). Interacts with PIWIL1; leading to sequester RNF8 in the cytoplasm. Interacts with WRAP53/TCAB1. Post-translationally, autoubiquitinated through 'Lys-48' and 'Lys-63' of ubiquitin. 'Lys-63' polyubiquitination is mediated by UBE2N. 'Lys-29'-type polyubiquitination is also observed, but it doesn't require its own functional RING-type zinc finger.

It localises to the nucleus. The protein resides in the cytoplasm. Its subcellular location is the midbody. The protein localises to the chromosome. It is found in the telomere. The catalysed reaction is S-ubiquitinyl-[E2 ubiquitin-conjugating enzyme]-L-cysteine + [acceptor protein]-L-lysine = [E2 ubiquitin-conjugating enzyme]-L-cysteine + N(6)-ubiquitinyl-[acceptor protein]-L-lysine.. The protein operates within protein modification; protein ubiquitination. Its function is as follows. E3 ubiquitin-protein ligase that plays a key role in DNA damage signaling via 2 distinct roles: by mediating the 'Lys-63'-linked ubiquitination of histones H2A and H2AX and promoting the recruitment of DNA repair proteins at double-strand breaks (DSBs) sites, and by catalyzing 'Lys-48'-linked ubiquitination to remove target proteins from DNA damage sites. Following DNA DSBs, it is recruited to the sites of damage by ATM-phosphorylated MDC1 and catalyzes the 'Lys-63'-linked ubiquitination of histones H2A and H2AX, thereby promoting the formation of TP53BP1 and BRCA1 ionizing radiation-induced foci (IRIF). Also controls the recruitment of UIMC1-BRCC3 (RAP80-BRCC36) and PAXIP1/PTIP to DNA damage sites. Promotes the recruitment of NBN to DNA damage sites by catalyzing 'Lys-6'-linked ubiquitination of NBN. Also recruited at DNA interstrand cross-links (ICLs) sites and catalyzes 'Lys-63'-linked ubiquitination of histones H2A and H2AX, leading to recruitment of FAAP20 and Fanconi anemia (FA) complex, followed by interstrand cross-link repair. H2A ubiquitination also mediates the ATM-dependent transcriptional silencing at regions flanking DSBs in cis, a mechanism to avoid collision between transcription and repair intermediates. Promotes the formation of 'Lys-63'-linked polyubiquitin chains via interactions with the specific ubiquitin-conjugating UBE2N/UBC13 and ubiquitinates non-histone substrates such as PCNA. Substrates that are polyubiquitinated at 'Lys-63' are usually not targeted for degradation. Also catalyzes the formation of 'Lys-48'-linked polyubiquitin chains via interaction with the ubiquitin-conjugating UBE2L6/UBCH8, leading to degradation of substrate proteins such as CHEK2, JMJD2A/KDM4A and KU80/XRCC5: it is still unclear how the preference toward 'Lys-48'- versus 'Lys-63'-linked ubiquitination is regulated but it could be due to RNF8 ability to interact with specific E2 specific ligases. For instance, interaction with phosphorylated HERC2 promotes the association between RNF8 and UBE2N/UBC13 and favors the specific formation of 'Lys-63'-linked ubiquitin chains. Promotes non-homologous end joining (NHEJ) by promoting the 'Lys-48'-linked ubiquitination and degradation the of KU80/XRCC5. Following DNA damage, mediates the ubiquitination and degradation of JMJD2A/KDM4A in collaboration with RNF168, leading to unmask H4K20me2 mark and promote the recruitment of TP53BP1 at DNA damage sites. Following DNA damage, mediates the ubiquitination and degradation of POLD4/p12, a subunit of DNA polymerase delta. In the absence of POLD4, DNA polymerase delta complex exhibits higher proofreading activity. In addition to its function in damage signaling, also plays a role in higher-order chromatin structure by mediating extensive chromatin decondensation. Involved in the activation of ATM by promoting histone H2B ubiquitination, which indirectly triggers histone H4 'Lys-16' acetylation (H4K16ac), establishing a chromatin environment that promotes efficient activation of ATM kinase. Required in the testis, where it plays a role in the replacement of histones during spermatogenesis. At uncapped telomeres, promotes the joining of deprotected chromosome ends by inducing H2A ubiquitination and TP53BP1 recruitment, suggesting that it may enhance cancer development by aggravating telomere-induced genome instability in case of telomeric crisis. Promotes the assembly of RAD51 at DNA DSBs in the absence of BRCA1 and TP53BP1 Also involved in class switch recombination in immune system, via its role in regulation of DSBs repair. May be required for proper exit from mitosis after spindle checkpoint activation and may regulate cytokinesis. May play a role in the regulation of RXRA-mediated transcriptional activity. Not involved in RXRA ubiquitination by UBE2E2. The chain is E3 ubiquitin-protein ligase RNF8 from Rattus norvegicus (Rat).